The following is a 207-amino-acid chain: Holliday junction branch migration complex subunit RuvA (207 aa).

Residues 1–65 (MYDYIRGTLT…ETEHLLYGFH (65 aa)) form a domain I region. Residues 66–144 (SREERECFRI…DLLPLDSRVE (79 aa)) form a domain II region. Positions 145 to 150 (TSQTHT) are flexible linker. Positions 150–207 (TTSSCLEEGIQALAALGYSKIAAERMIAEAIKDLPEGSSLTDILPIALKKNFSGVNKD) are domain III.

The protein belongs to the RuvA family. As to quaternary structure, homotetramer. Forms an RuvA(8)-RuvB(12)-Holliday junction (HJ) complex. HJ DNA is sandwiched between 2 RuvA tetramers; dsDNA enters through RuvA and exits via RuvB. An RuvB hexamer assembles on each DNA strand where it exits the tetramer. Each RuvB hexamer is contacted by two RuvA subunits (via domain III) on 2 adjacent RuvB subunits; this complex drives branch migration. In the full resolvosome a probable DNA-RuvA(4)-RuvB(12)-RuvC(2) complex forms which resolves the HJ.

Its subcellular location is the cytoplasm. The RuvA-RuvB-RuvC complex processes Holliday junction (HJ) DNA during genetic recombination and DNA repair, while the RuvA-RuvB complex plays an important role in the rescue of blocked DNA replication forks via replication fork reversal (RFR). RuvA specifically binds to HJ cruciform DNA, conferring on it an open structure. The RuvB hexamer acts as an ATP-dependent pump, pulling dsDNA into and through the RuvAB complex. HJ branch migration allows RuvC to scan DNA until it finds its consensus sequence, where it cleaves and resolves the cruciform DNA. This Chlamydia pneumoniae (Chlamydophila pneumoniae) protein is Holliday junction branch migration complex subunit RuvA.